The following is a 953-amino-acid chain: Isoleucine--tRNA ligase (953 aa).

A 'HIGH' region motif is present at residues 57-67; it reads PYANGDIHIGH. An L-isoleucyl-5'-AMP-binding site is contributed by Glu-582. The 'KMSKS' region motif lies at 623–627; that stretch reads KMSKS. Residue Lys-626 participates in ATP binding. Zn(2+)-binding residues include Cys-916, Cys-919, Cys-936, and Cys-939.

The protein belongs to the class-I aminoacyl-tRNA synthetase family. IleS type 1 subfamily. As to quaternary structure, monomer. Zn(2+) serves as cofactor.

It is found in the cytoplasm. The catalysed reaction is tRNA(Ile) + L-isoleucine + ATP = L-isoleucyl-tRNA(Ile) + AMP + diphosphate. Catalyzes the attachment of isoleucine to tRNA(Ile). As IleRS can inadvertently accommodate and process structurally similar amino acids such as valine, to avoid such errors it has two additional distinct tRNA(Ile)-dependent editing activities. One activity is designated as 'pretransfer' editing and involves the hydrolysis of activated Val-AMP. The other activity is designated 'posttransfer' editing and involves deacylation of mischarged Val-tRNA(Ile). This chain is Isoleucine--tRNA ligase, found in Bordetella petrii (strain ATCC BAA-461 / DSM 12804 / CCUG 43448).